The primary structure comprises 166 residues: Salivary acidic proline-rich phosphoprotein 1/2 (166 aa).

A signal peptide spans 1–16; the sequence is MLLILLSVALLAFSSA. The tract at residues 16-166 is disordered; that stretch reads AQDLDEDVSQ…QGPPQGQSPQ (151 aa). At Q17 the chain carries Pyrrolidone carboxylic acid. The tract at residues 17–46 is inhibits hydroxyapatite formation, binds to hydroxyapatite and calcium; sequence QDLDEDVSQEDVPLVISDGGDSEQFIDEER. A Phosphoserine; by FAM20C modification is found at S24. Position 33 is a phosphoserine; alternate (S33). O-linked (GlcA) serine; alternate glycans are attached at residues S33 and S38. S38 carries the post-translational modification Phosphoserine; by FAM20C; alternate. Composition is skewed to low complexity over residues 48 to 61 and 68 to 82; these read GPPL…PSAG and GPQQ…QQQQ. Composition is skewed to pro residues over residues 83–111 and 137–159; these read GPPP…PQGP.

In terms of processing, proteolytically cleaved; PRP-2, PRP-1, PIF-S and Db-S yield PRP-4, PRP-3 (protein A), PIF-F and Db-F, respectively. A hexuronic acid was shown to be linked to Ser-33 in about 40% of the polypeptides. Neither the structure of the carbohydrate (whether glucuronic acid or an isomer of), nor the linkage (whether a glycoside or an ester) has been definitely established.

It is found in the secreted. PRP's act as highly potent inhibitors of crystal growth of calcium phosphates. They provide a protective and reparative environment for dental enamel which is important for the integrity of the teeth. The chain is Salivary acidic proline-rich phosphoprotein 1/2 (PRH1) from Homo sapiens (Human).